The sequence spans 357 residues: Holliday junction branch migration complex subunit RuvB (357 aa).

The segment covering 1–10 (MAIQSDSLSS) has biased composition (polar residues). A disordered region spans residues 1–30 (MAIQSDSLSSRPDAPRLVAPAPASPNEESI). The large ATPase domain (RuvB-L) stretch occupies residues 5-195 (SDSLSSRPDA…FGIVSRLEFY (191 aa)). Residues L34, R35, G76, K79, T80, T81, 142–144 (EDF), R185, Y195, and R232 contribute to the ATP site. Residue T80 coordinates Mg(2+). The interval 196-266 (NTDDLAHIVT…AANQALAMLE (71 aa)) is small ATPAse domain (RuvB-S). Residues 269–357 (PQGLDLMDRK…QPSSGDLFGA (89 aa)) form a head domain (RuvB-H) region. Positions 305, 324, and 329 each coordinate DNA.

The protein belongs to the RuvB family. In terms of assembly, homohexamer. Forms an RuvA(8)-RuvB(12)-Holliday junction (HJ) complex. HJ DNA is sandwiched between 2 RuvA tetramers; dsDNA enters through RuvA and exits via RuvB. An RuvB hexamer assembles on each DNA strand where it exits the tetramer. Each RuvB hexamer is contacted by two RuvA subunits (via domain III) on 2 adjacent RuvB subunits; this complex drives branch migration. In the full resolvosome a probable DNA-RuvA(4)-RuvB(12)-RuvC(2) complex forms which resolves the HJ.

It localises to the cytoplasm. The catalysed reaction is ATP + H2O = ADP + phosphate + H(+). Its function is as follows. The RuvA-RuvB-RuvC complex processes Holliday junction (HJ) DNA during genetic recombination and DNA repair, while the RuvA-RuvB complex plays an important role in the rescue of blocked DNA replication forks via replication fork reversal (RFR). RuvA specifically binds to HJ cruciform DNA, conferring on it an open structure. The RuvB hexamer acts as an ATP-dependent pump, pulling dsDNA into and through the RuvAB complex. RuvB forms 2 homohexamers on either side of HJ DNA bound by 1 or 2 RuvA tetramers; 4 subunits per hexamer contact DNA at a time. Coordinated motions by a converter formed by DNA-disengaged RuvB subunits stimulates ATP hydrolysis and nucleotide exchange. Immobilization of the converter enables RuvB to convert the ATP-contained energy into a lever motion, pulling 2 nucleotides of DNA out of the RuvA tetramer per ATP hydrolyzed, thus driving DNA branch migration. The RuvB motors rotate together with the DNA substrate, which together with the progressing nucleotide cycle form the mechanistic basis for DNA recombination by continuous HJ branch migration. Branch migration allows RuvC to scan DNA until it finds its consensus sequence, where it cleaves and resolves cruciform DNA. The protein is Holliday junction branch migration complex subunit RuvB of Bordetella avium (strain 197N).